Here is a 367-residue protein sequence, read N- to C-terminus: Phosphoribosylaminoimidazole-succinocarboxamide synthase (367 aa).

The protein belongs to the SAICAR synthetase family.

The catalysed reaction is 5-amino-1-(5-phospho-D-ribosyl)imidazole-4-carboxylate + L-aspartate + ATP = (2S)-2-[5-amino-1-(5-phospho-beta-D-ribosyl)imidazole-4-carboxamido]succinate + ADP + phosphate + 2 H(+). It functions in the pathway purine metabolism; IMP biosynthesis via de novo pathway; 5-amino-1-(5-phospho-D-ribosyl)imidazole-4-carboxamide from 5-amino-1-(5-phospho-D-ribosyl)imidazole-4-carboxylate: step 1/2. The protein is Phosphoribosylaminoimidazole-succinocarboxamide synthase of Saccharophagus degradans (strain 2-40 / ATCC 43961 / DSM 17024).